Reading from the N-terminus, the 338-residue chain is Mugineic-acid 3-dioxygenase (338 aa).

Positions 180–283 constitute a Fe2OG dioxygenase domain; that stretch reads DISGGRVVVD…RLSVASFIVP (104 aa). Fe cation is bound by residues His208, Asp210, and His264. Arg274 contributes to the 2-oxoglutarate binding site.

Belongs to the iron/ascorbate-dependent oxidoreductase family. Fe(2+) serves as cofactor. It depends on L-ascorbate as a cofactor. In terms of tissue distribution, expressed in roots, but not in leaves.

It carries out the reaction mugineate + 2-oxoglutarate + O2 = 3-epihydroxymugineate + succinate + CO2 + H(+). The enzyme catalyses 2'-deoxymugineate + 2-oxoglutarate + O2 = 3-epihydroxy-2'-deoxymugineate + succinate + CO2 + H(+). Its function is as follows. Involved in the biosynthesis of mugineic acid family of phytosiderophores. Hydroxylates the C-3 positions of mugineic acid (MA) and 2'-deoxymugineic acid (DMA). May be involved in boron tolerance. The polypeptide is Mugineic-acid 3-dioxygenase (IDS2) (Hordeum vulgare (Barley)).